We begin with the raw amino-acid sequence, 138 residues long: Large ribosomal subunit protein mL54 (138 aa).

The N-terminal 14 residues, 1–14, are a transit peptide targeting the mitochondrion; it reads MATKRLFGATRTWA.

This sequence belongs to the mitochondrion-specific ribosomal protein mL54 family. As to quaternary structure, component of the mitochondrial large ribosomal subunit (mt-LSU). Mature mammalian 55S mitochondrial ribosomes consist of a small (28S) and a large (39S) subunit. The 28S small subunit contains a 12S ribosomal RNA (12S mt-rRNA) and 30 different proteins. The 39S large subunit contains a 16S rRNA (16S mt-rRNA), a copy of mitochondrial valine transfer RNA (mt-tRNA(Val)), which plays an integral structural role, and 52 different proteins.

The protein localises to the mitochondrion. The chain is Large ribosomal subunit protein mL54 (MRPL54) from Homo sapiens (Human).